The chain runs to 167 residues: Large ribosomal subunit protein uL10 (167 aa).

The protein belongs to the universal ribosomal protein uL10 family. In terms of assembly, part of the ribosomal stalk of the 50S ribosomal subunit. The N-terminus interacts with L11 and the large rRNA to form the base of the stalk. The C-terminus forms an elongated spine to which L12 dimers bind in a sequential fashion forming a multimeric L10(L12)X complex.

Functionally, forms part of the ribosomal stalk, playing a central role in the interaction of the ribosome with GTP-bound translation factors. In Streptococcus mutans serotype c (strain ATCC 700610 / UA159), this protein is Large ribosomal subunit protein uL10.